We begin with the raw amino-acid sequence, 379 residues long: Oxysterol-binding protein-related protein 4C (379 aa).

Belongs to the OSBP family. Expressed in flowers.

Its function is as follows. May be involved in the transport of sterols. This Arabidopsis thaliana (Mouse-ear cress) protein is Oxysterol-binding protein-related protein 4C (ORP4C).